We begin with the raw amino-acid sequence, 723 residues long: BTB/POZ domain-containing protein 18 (723 aa).

The region spanning C34–Q102 is the BTB domain. 3 disordered regions span residues A150–L176, E188–Q350, and E370–T394. Composition is skewed to polar residues over residues R162–S174 and N195–T205. 2 stretches are compositionally biased toward low complexity: residues Q217 to R227 and T271 to T286. Composition is skewed to basic and acidic residues over residues Q303–E312 and K327–P336. S414 carries the post-translational modification Phosphoserine. Residues T603–L637 form a disordered region. Residues Q617–S626 show a composition bias toward basic and acidic residues. Polar residues predominate over residues S627–H636. S682 and S683 each carry phosphoserine. The interval L699–T723 is disordered. The segment covering S713–T723 has biased composition (acidic residues).

As to expression, expressed in testis.

The protein localises to the nucleus. Functionally, specifically required during spermatogenesis to promote expression of piRNA precursors. The piRNA metabolic process mediates the repression of transposable elements during meiosis by forming complexes composed of piRNAs and Piwi proteins and governs the methylation and subsequent repression of transposons, which is essential for the germline integrity. Acts by facilitating transcription elongation at piRNA loci during pachytene. The polypeptide is BTB/POZ domain-containing protein 18 (Mus musculus (Mouse)).